A 1110-amino-acid chain; its full sequence is Isoleucine--tRNA ligase (1110 aa).

Positions 47–57 match the 'HIGH' region motif; that stretch reads PSANGTPGIHH. Positions 658 to 662 match the 'KMSKS' region motif; the sequence is KMSKR. Lysine 661 contributes to the ATP binding site.

The protein belongs to the class-I aminoacyl-tRNA synthetase family. IleS type 2 subfamily. Monomer. Requires Zn(2+) as cofactor.

The protein resides in the cytoplasm. It catalyses the reaction tRNA(Ile) + L-isoleucine + ATP = L-isoleucyl-tRNA(Ile) + AMP + diphosphate. Functionally, catalyzes the attachment of isoleucine to tRNA(Ile). As IleRS can inadvertently accommodate and process structurally similar amino acids such as valine, to avoid such errors it has two additional distinct tRNA(Ile)-dependent editing activities. One activity is designated as 'pretransfer' editing and involves the hydrolysis of activated Val-AMP. The other activity is designated 'posttransfer' editing and involves deacylation of mischarged Val-tRNA(Ile). This Cytophaga hutchinsonii (strain ATCC 33406 / DSM 1761 / CIP 103989 / NBRC 15051 / NCIMB 9469 / D465) protein is Isoleucine--tRNA ligase.